Consider the following 826-residue polypeptide: Ribosome-releasing factor 2, mitochondrial (826 aa).

The N-terminal 44 residues, 1–44 (MIVRNLLGKNRLCCLQPKLLLSTLSQRPQLQLSLQLLCRATRLY), are a transit peptide targeting the mitochondrion. The tr-type G domain occupies 53 to 340 (PKTRNIGIIA…GITNYLPSPL (288 aa)). GTP-binding positions include 62-69 (AHIDAGKT), 126-130 (DTPGH), and 180-183 (NKMD).

It belongs to the TRAFAC class translation factor GTPase superfamily. Classic translation factor GTPase family. EF-G/EF-2 subfamily.

The protein localises to the mitochondrion. Mitochondrial GTPase that mediates the disassembly of ribosomes from messenger RNA at the termination of mitochondrial protein biosynthesis. Not involved in the GTP-dependent ribosomal translocation step during translation elongation. The protein is Ribosome-releasing factor 2, mitochondrial of Lodderomyces elongisporus (strain ATCC 11503 / CBS 2605 / JCM 1781 / NBRC 1676 / NRRL YB-4239) (Yeast).